The primary structure comprises 143 residues: Ayaconin (143 aa).

An N-terminal signal peptide occupies residues 1–22 (MSFLFFLVVLISIGLWVGPCVA).

In terms of assembly, interacts with human F12 (inactive). Salivary gland.

It localises to the secreted. In terms of biological role, inhibits the intrinsic blood coagulation pathway in the host by blocking activation of host coagulation factor XII (F12). The sequence is that of Ayaconin from Lutzomyia ayacuchensis (Sand fly).